The primary structure comprises 525 residues: GMP synthase [glutamine-hydrolyzing] (525 aa).

Positions 8–206 constitute a Glutamine amidotransferase type-1 domain; it reads PLLILDFGSQ…VVDICKASTD (199 aa). The active-site Nucleophile is C85. Residues H180 and E182 contribute to the active site. Residues 207–400 enclose the GMPS ATP-PPase domain; sequence WTPEHIIDEA…LGLPHDMVYR (194 aa). 234-240 is a binding site for ATP; the sequence is SGGVDSS.

As to quaternary structure, homodimer.

It carries out the reaction XMP + L-glutamine + ATP + H2O = GMP + L-glutamate + AMP + diphosphate + 2 H(+). It functions in the pathway purine metabolism; GMP biosynthesis; GMP from XMP (L-Gln route): step 1/1. In terms of biological role, catalyzes the synthesis of GMP from XMP. In Legionella pneumophila (strain Lens), this protein is GMP synthase [glutamine-hydrolyzing].